Here is a 152-residue protein sequence, read N- to C-terminus: D-aminoacyl-tRNA deacylase (152 aa).

The Gly-cisPro motif, important for rejection of L-amino acids motif lies at 137 to 138 (GP).

The protein belongs to the DTD family. As to quaternary structure, homodimer.

Its subcellular location is the cytoplasm. The catalysed reaction is glycyl-tRNA(Ala) + H2O = tRNA(Ala) + glycine + H(+). It carries out the reaction a D-aminoacyl-tRNA + H2O = a tRNA + a D-alpha-amino acid + H(+). Functionally, an aminoacyl-tRNA editing enzyme that deacylates mischarged D-aminoacyl-tRNAs. Also deacylates mischarged glycyl-tRNA(Ala), protecting cells against glycine mischarging by AlaRS. Acts via tRNA-based rather than protein-based catalysis; rejects L-amino acids rather than detecting D-amino acids in the active site. By recycling D-aminoacyl-tRNA to D-amino acids and free tRNA molecules, this enzyme counteracts the toxicity associated with the formation of D-aminoacyl-tRNA entities in vivo and helps enforce protein L-homochirality. This is D-aminoacyl-tRNA deacylase from Geobacillus sp. (strain WCH70).